Here is a 1118-residue protein sequence, read N- to C-terminus: uncharacterized protein (1118 aa).

Disordered stretches follow at residues 1-69 (MESG…NGED), 1044-1071 (PKSV…EKID), and 1090-1118 (IRPT…SFEL). A compositionally biased stretch (acidic residues) spans 13-34 (DMVEEDNDEDSFEEPACEDSFD). Residues 35-60 (SQEASSKANEPQNDSFDEPIQSSVSK) are compositionally biased toward polar residues. A compositionally biased stretch (acidic residues) spans 1107 to 1118 (EDSDDLEDSFEL).

This is an uncharacterized protein from Caenorhabditis elegans.